The sequence spans 308 residues: Porphobilinogen deaminase (308 aa).

An S-(dipyrrolylmethanemethyl)cysteine modification is found at Cys-241.

Belongs to the HMBS family. In terms of assembly, monomer. The cofactor is dipyrromethane.

It catalyses the reaction 4 porphobilinogen + H2O = hydroxymethylbilane + 4 NH4(+). It functions in the pathway porphyrin-containing compound metabolism; protoporphyrin-IX biosynthesis; coproporphyrinogen-III from 5-aminolevulinate: step 2/4. Tetrapolymerization of the monopyrrole PBG into the hydroxymethylbilane pre-uroporphyrinogen in several discrete steps. In Staphylococcus aureus (strain MRSA252), this protein is Porphobilinogen deaminase.